Consider the following 139-residue polypeptide: Small ribosomal subunit protein bS6 (139 aa).

The interval 119-139 (LKGASKVETPTGPESTDIQEK) is disordered. The span at 130–139 (GPESTDIQEK) shows a compositional bias: polar residues.

It belongs to the bacterial ribosomal protein bS6 family.

Its function is as follows. Binds together with bS18 to 16S ribosomal RNA. This chain is Small ribosomal subunit protein bS6, found in Borreliella burgdorferi (strain ZS7) (Borrelia burgdorferi).